A 490-amino-acid polypeptide reads, in one-letter code: MVPVVALVGRPNVGKSTLFNRLTRTRDALVADFPGLTRDRKYGRAEIEGREFICIDTGGIDGTEDGVETRMAEQSLLAIEEADVVLFMVDARAGLMPADEAIAKHLRSREKPTFLVANKTDGLDPDQAVVDFYSLGLGEIYPIAASHGRGVLSLLEHVLLPWMEDLAPQEEVDEDAEYWAQFEAEENGEEEEEDDFDPQSLPIKLAIVGRPNVGKSTLTNRILGEERVVVYDMPGTTRDSIYIPMERDGREYVLIDTAGVRKRGKITDAVEKFSVIKTLQAIEDANVVMLVIDAREGISDQDLSLLGFILNSGRSLVIVVNKWDGLSQEVKEQVKETLDFRLGFIDFARVHFISALHGSGVGNLFESVREAYDSSTRRVGTSMLTRIMTMAVEDHQPPLVRGRRVKLKYAHAGGYNPPIVVIHGNQVKDLPDSYKRYLMNYFRKSLDVMGTPIRIQFKEGENPYANKRNTLTPTQMRKRKRLMKHIKKSK.

2 consecutive EngA-type G domains span residues 3–166 (PVVA…MEDL) and 203–376 (IKLA…DSST). GTP-binding positions include 9–16 (GRPNVGKS), 56–60 (DTGGI), 118–121 (NKTD), 209–216 (GRPNVGKS), 256–260 (DTAGV), and 321–324 (NKWD). The KH-like domain occupies 377–461 (RRVGTSMLTR…PIRIQFKEGE (85 aa)).

It belongs to the TRAFAC class TrmE-Era-EngA-EngB-Septin-like GTPase superfamily. EngA (Der) GTPase family. As to quaternary structure, associates with the 50S ribosomal subunit.

Its function is as follows. GTPase that plays an essential role in the late steps of ribosome biogenesis. In Escherichia fergusonii (strain ATCC 35469 / DSM 13698 / CCUG 18766 / IAM 14443 / JCM 21226 / LMG 7866 / NBRC 102419 / NCTC 12128 / CDC 0568-73), this protein is GTPase Der.